We begin with the raw amino-acid sequence, 433 residues long: PC-esterase domain-containing protein 1B (433 aa).

The segment at 386-433 is disordered; that stretch reads PPCHQRQAPVVHRGFPRHFARGPYSNPWRDRPRRPPKHSPAGLESRPQ.

Belongs to the PC-esterase family.

The sequence is that of PC-esterase domain-containing protein 1B (Pced1b) from Mus musculus (Mouse).